Reading from the N-terminus, the 631-residue chain is Phosphomethylpyrimidine synthase (631 aa).

Residues Asn-239, Met-268, Tyr-297, His-333, 353 to 355 (SRG), 394 to 397 (DGLR), and Glu-433 contribute to the substrate site. Position 437 (His-437) interacts with Zn(2+). Tyr-460 contacts substrate. His-501 provides a ligand contact to Zn(2+). Cys-581, Cys-584, and Cys-589 together coordinate [4Fe-4S] cluster.

Belongs to the ThiC family. In terms of assembly, homodimer. [4Fe-4S] cluster is required as a cofactor.

The enzyme catalyses 5-amino-1-(5-phospho-beta-D-ribosyl)imidazole + S-adenosyl-L-methionine = 4-amino-2-methyl-5-(phosphooxymethyl)pyrimidine + CO + 5'-deoxyadenosine + formate + L-methionine + 3 H(+). It functions in the pathway cofactor biosynthesis; thiamine diphosphate biosynthesis. In terms of biological role, catalyzes the synthesis of the hydroxymethylpyrimidine phosphate (HMP-P) moiety of thiamine from aminoimidazole ribotide (AIR) in a radical S-adenosyl-L-methionine (SAM)-dependent reaction. The chain is Phosphomethylpyrimidine synthase from Salmonella schwarzengrund (strain CVM19633).